The sequence spans 297 residues: Ribosomal RNA small subunit methyltransferase A (297 aa).

S-adenosyl-L-methionine is bound by residues N31, L33, G58, E79, D104, and N129.

This sequence belongs to the class I-like SAM-binding methyltransferase superfamily. rRNA adenine N(6)-methyltransferase family. RsmA subfamily.

It localises to the cytoplasm. The catalysed reaction is adenosine(1518)/adenosine(1519) in 16S rRNA + 4 S-adenosyl-L-methionine = N(6)-dimethyladenosine(1518)/N(6)-dimethyladenosine(1519) in 16S rRNA + 4 S-adenosyl-L-homocysteine + 4 H(+). Functionally, specifically dimethylates two adjacent adenosines (A1518 and A1519) in the loop of a conserved hairpin near the 3'-end of 16S rRNA in the 30S particle. May play a critical role in biogenesis of 30S subunits. The polypeptide is Ribosomal RNA small subunit methyltransferase A (Staphylococcus aureus (strain Mu3 / ATCC 700698)).